We begin with the raw amino-acid sequence, 190 residues long: Dynein axonemal light chain 1 (190 aa).

Ala-2 is modified (N-acetylalanine). LRR repeat units lie at residues 49-70 (NCEKLSLSTNCIEKIANLNGLK), 71-92 (NLRILSLGRNNIKNLNGLEAVG), 94-115 (TLEELWISYNFIEKLKGIHIMK), and 116-137 (KLKILYMSNNLVKDWAEFVKLA). Position 56 is a phosphoserine (Ser-56). The region spanning 150-190 (NPLEEKHSAENNWIEEATKRVPKLKKLDGTPVIKGDEEEDN) is the LRRCT domain.

The protein belongs to the dynein light chain LC1-type family. In terms of assembly, interacts with ZMYND10 (via C-terminus). Interacts with DNAH5, a outer arm dynein heavy chain. Interacts with tubulin located within the A-tubule of the outer doublets in a ATP-independent manner. Expressed in tissues carrying motile cilia such as respiratory epithelia, ependyma and testis.

It is found in the cytoplasm. It localises to the cytoskeleton. Its subcellular location is the cilium axoneme. Part of the multisubunit axonemal ATPase complexes that generate the force for cilia motility and govern beat frequency. Component of the outer arm dynein (ODA). May be involved in a mechanosensory feedback mechanism controlling ODA activity based on external conformational cues by tethering the outer arm dynein heavy chain (DNAH5) to the microtubule within the axoneme. Important for ciliary function in the airways and for the function of the cilia that produce the nodal flow essential for the determination of the left-right asymmetry. This is Dynein axonemal light chain 1 from Homo sapiens (Human).